The primary structure comprises 578 residues: uncharacterized protein (578 aa).

This is an uncharacterized protein from Ostreid herpesvirus 1 (isolate France) (OsHV-1).